The following is a 374-amino-acid chain: Multicilin (374 aa).

Disordered regions lie at residues 18–72 and 84–105; these read CPNR…ALPA and CSSF…QSHS. Residues 168–216 are a coiled coil; the sequence is EQYWKEVADQNQRALGDALIENNQLHATLTQKQEEIASLKERNLQLKEL. The segment at 284–306 is disordered; sequence LQSRDPKRLRLQPEPQSLDRRPG.

It belongs to the geminin family. In terms of assembly, heterodimer (via coiled-coil domain) with GMNN (via coiled-coil domain); targets GMNN to the nucleus. Can form homodimers (in vitro, via coiled-coil domain), but these are much less stable than the heterodimer formed with GMNN.

Its subcellular location is the nucleus. Functionally, transcription regulator specifically required for multiciliate cell differentiation. Acts in a multiprotein complex containing E2F4 and E2F5 that binds and activates genes required for centriole biogenesis. Required for the deuterosome-mediated acentriolar pathway. Plays a role in mitotic cell cycle progression by promoting cell cycle exit. Modulates GMNN activity by reducing its affinity for CDT1. The polypeptide is Multicilin (MCIDAS) (Bos taurus (Bovine)).